The chain runs to 324 residues: Glycerol-3-phosphate dehydrogenase [NAD(P)+] (324 aa).

The NADPH site is built by Trp15, Arg35, and Lys101. Sn-glycerol 3-phosphate is bound by residues Lys101 and Gly129. Ala133 is a binding site for NADPH. Sn-glycerol 3-phosphate contacts are provided by Lys184, Asp237, Ser247, Arg248, and Asn249. Lys184 functions as the Proton acceptor in the catalytic mechanism. Residue Arg248 coordinates NADPH. 2 residues coordinate NADPH: Val272 and Glu274.

The protein belongs to the NAD-dependent glycerol-3-phosphate dehydrogenase family.

The protein resides in the cytoplasm. The catalysed reaction is sn-glycerol 3-phosphate + NAD(+) = dihydroxyacetone phosphate + NADH + H(+). The enzyme catalyses sn-glycerol 3-phosphate + NADP(+) = dihydroxyacetone phosphate + NADPH + H(+). It participates in membrane lipid metabolism; glycerophospholipid metabolism. Catalyzes the reduction of the glycolytic intermediate dihydroxyacetone phosphate (DHAP) to sn-glycerol 3-phosphate (G3P), the key precursor for phospholipid synthesis. The chain is Glycerol-3-phosphate dehydrogenase [NAD(P)+] from Gluconobacter oxydans (strain 621H) (Gluconobacter suboxydans).